Consider the following 117-residue polypeptide: UPF0122 protein TTE1463 (117 aa).

This sequence belongs to the UPF0122 family.

In terms of biological role, might take part in the signal recognition particle (SRP) pathway. This is inferred from the conservation of its genetic proximity to ftsY/ffh. May be a regulatory protein. This Caldanaerobacter subterraneus subsp. tengcongensis (strain DSM 15242 / JCM 11007 / NBRC 100824 / MB4) (Thermoanaerobacter tengcongensis) protein is UPF0122 protein TTE1463.